Consider the following 494-residue polypeptide: Ubiquinol-cytochrome-c reductase complex core protein I, mitochondrial (494 aa).

Histidine 70 contributes to the Zn(2+) binding site. The Proton acceptor role is filled by glutamate 73. Zn(2+) contacts are provided by histidine 74 and glutamate 150.

This sequence belongs to the peptidase M16 family. UQCRC1/QCR1 subfamily. Component of the ubiquinol-cytochrome c oxidoreductase (cytochrome b-c1 complex, complex III, CIII), a multisubunit enzyme composed of 10 subunits. The complex is composed of 3 respiratory subunits cytochrome b, cytochrome c1 and Rieske protein, 2 core protein subunits, and additional low-molecular weight protein subunits. The complex exists as an obligatory dimer and forms supercomplexes (SCs) in the inner mitochondrial membrane with cytochrome c oxidase (complex IV, CIV). It depends on Zn(2+) as a cofactor. Post-translationally, the N-terminus is blocked.

It is found in the mitochondrion inner membrane. Functionally, component of the ubiquinol-cytochrome c oxidoreductase, a multisubunit transmembrane complex that is part of the mitochondrial electron transport chain which drives oxidative phosphorylation. The respiratory chain contains 3 multisubunit complexes succinate dehydrogenase (complex II, CII), ubiquinol-cytochrome c oxidoreductase (cytochrome b-c1 complex, complex III, CIII) and cytochrome c oxidase (complex IV, CIV), that cooperate to transfer electrons derived from NADH and succinate to molecular oxygen, creating an electrochemical gradient over the inner membrane that drives transmembrane transport and the ATP synthase. The cytochrome b-c1 complex catalyzes electron transfer from ubiquinol to cytochrome c, linking this redox reaction to translocation of protons across the mitochondrial inner membrane, with protons being carried across the membrane as hydrogens on the quinol. In the process called Q cycle, 2 protons are consumed from the matrix, 4 protons are released into the intermembrane space and 2 electrons are passed to cytochrome c. The sequence is that of Ubiquinol-cytochrome-c reductase complex core protein I, mitochondrial from Euglena gracilis.